The sequence spans 553 residues: 5'-nucleotidase (553 aa).

The first 21 residues, 1–21 (MKQGLILKSVLSAAIIASLAG), serve as a signal peptide directing secretion. Residue cysteine 22 is the site of N-palmitoyl cysteine attachment. A lipid anchor (S-diacylglycerol cysteine) is attached at cysteine 22. A divalent metal cation is bound by residues aspartate 45, histidine 47, aspartate 88, asparagine 120, histidine 221, histidine 256, and glutamine 258. Substrate is bound by residues phenylalanine 432 and 501–507 (FNAAGGD).

This sequence belongs to the 5'-nucleotidase family. It depends on chloride as a cofactor. The cofactor is Mg(2+).

The protein resides in the cell outer membrane. The catalysed reaction is a ribonucleoside 5'-phosphate + H2O = a ribonucleoside + phosphate. Degradation of extracellular 5'-nucleotides for nutritional needs. The protein is 5'-nucleotidase (nutA) of Vibrio cholerae serotype O1 (strain ATCC 39315 / El Tor Inaba N16961).